A 131-amino-acid chain; its full sequence is Large ribosomal subunit protein eL32 (131 aa).

Belongs to the eukaryotic ribosomal protein eL32 family. Component of the large ribosomal subunit (LSU). Mature N.crassa ribosomes consist of a small (40S) and a large (60S) subunit. The 40S small subunit contains 1 molecule of ribosomal RNA (18S rRNA) and at least 32 different proteins. The large 60S subunit contains 3 rRNA molecules (26S, 5.8S and 5S rRNA) and at least 42 different proteins.

It is found in the cytoplasm. In terms of biological role, component of the ribosome, a large ribonucleoprotein complex responsible for the synthesis of proteins in the cell. The small ribosomal subunit (SSU) binds messenger RNAs (mRNAs) and translates the encoded message by selecting cognate aminoacyl-transfer RNA (tRNA) molecules. The large subunit (LSU) contains the ribosomal catalytic site termed the peptidyl transferase center (PTC), which catalyzes the formation of peptide bonds, thereby polymerizing the amino acids delivered by tRNAs into a polypeptide chain. The nascent polypeptides leave the ribosome through a tunnel in the LSU and interact with protein factors that function in enzymatic processing, targeting, and the membrane insertion of nascent chains at the exit of the ribosomal tunnel. The protein is Large ribosomal subunit protein eL32 (crp-63) of Neurospora crassa (strain ATCC 24698 / 74-OR23-1A / CBS 708.71 / DSM 1257 / FGSC 987).